An 80-amino-acid polypeptide reads, in one-letter code: Defensin-like protein 204 (80 aa).

Residues 1–29 (MAKTFSSICFTTLLLVVLFISTEIPKSEA) form the signal peptide. Disulfide bonds link Cys-43–Cys-64, Cys-48–Cys-73, and Cys-52–Cys-75.

The protein belongs to the DEFL family.

It localises to the secreted. The chain is Defensin-like protein 204 from Arabidopsis thaliana (Mouse-ear cress).